Here is a 417-residue protein sequence, read N- to C-terminus: NADH-quinone oxidoreductase subunit D (417 aa).

Belongs to the complex I 49 kDa subunit family. In terms of assembly, NDH-1 is composed of 14 different subunits. Subunits NuoB, C, D, E, F, and G constitute the peripheral sector of the complex.

The protein localises to the cell inner membrane. It catalyses the reaction a quinone + NADH + 5 H(+)(in) = a quinol + NAD(+) + 4 H(+)(out). In terms of biological role, NDH-1 shuttles electrons from NADH, via FMN and iron-sulfur (Fe-S) centers, to quinones in the respiratory chain. The immediate electron acceptor for the enzyme in this species is believed to be ubiquinone. Couples the redox reaction to proton translocation (for every two electrons transferred, four hydrogen ions are translocated across the cytoplasmic membrane), and thus conserves the redox energy in a proton gradient. This chain is NADH-quinone oxidoreductase subunit D, found in Leptothrix cholodnii (strain ATCC 51168 / LMG 8142 / SP-6) (Leptothrix discophora (strain SP-6)).